A 571-amino-acid chain; its full sequence is Peptide-N4-(N-acetyl-beta-glucosaminyl)asparagine amidase A (571 aa).

12 N-linked (GlcNAc...) asparagine glycosylation sites follow: Asn-121, Asn-143, Asn-197, Asn-241, Asn-318, Asn-367, Asn-390, Asn-423, Asn-457, Asn-481, Asn-524, and Asn-529.

Heterodimer of a large and a small chain. Post-translationally, is highly glycosylated and is largly resistant against self-deglycosylation.

The catalysed reaction is Hydrolysis of an N(4)-(acetyl-beta-D-glucosaminyl)asparagine residue in which the glucosamine residue may be further glycosylated, to yield a (substituted) N-acetyl-beta-D-glucosaminylamine and a peptide containing an aspartate residue.. This chain is Peptide-N4-(N-acetyl-beta-glucosaminyl)asparagine amidase A, found in Prunus dulcis (Almond).